Consider the following 392-residue polypeptide: Phosphoglycerate kinase (392 aa).

Substrate-binding positions include 21-23 (DLN), arginine 36, 59-62 (HLGR), arginine 113, and arginine 146. Residues lysine 197, glutamate 319, and 345-348 (GGDT) contribute to the ATP site.

It belongs to the phosphoglycerate kinase family. In terms of assembly, monomer.

The protein localises to the cytoplasm. The enzyme catalyses (2R)-3-phosphoglycerate + ATP = (2R)-3-phospho-glyceroyl phosphate + ADP. It participates in carbohydrate degradation; glycolysis; pyruvate from D-glyceraldehyde 3-phosphate: step 2/5. The polypeptide is Phosphoglycerate kinase (Thioalkalivibrio sulfidiphilus (strain HL-EbGR7)).